Consider the following 829-residue polypeptide: G-type lectin S-receptor-like serine/threonine-protein kinase At1g34300 (829 aa).

The N-terminal stretch at 1-25 is a signal peptide; the sequence is MAVKTPFLKLLPLLLLLLHFPFSFS. Bulb-type lectin domains follow at residues 26-140 and 143-260; these read TIPL…SSFD and TDTI…PVNA. Residues 26–421 lie on the Extracellular side of the membrane; the sequence is TIPLGSVIYA…KGDDNNSKVH (396 aa). N-linked (GlcNAc...) asparagine glycans are attached at residues N46, N98, N130, N151, N172, N178, N189, and N195. The region spanning 264 to 301 is the EGF-like domain; sequence AVDQCLVYGYCGNFGICSYNDTNPICSCPSRNFDFVDV. Disulfide bonds link C268-C280, C274-C289, C317-C399, C350-C373, and C354-C360. N-linked (GlcNAc...) asparagine glycosylation is found at N283 and N320. The Apple domain maps to 317 to 399; the sequence is CSGNTTMLDL…VPSTSYVKVC (83 aa). Residue N416 is glycosylated (N-linked (GlcNAc...) asparagine). The chain crosses the membrane as a helical span at residues 422-442; the sequence is LWIVAVAVIAGLLGLVAVEIG. The Cytoplasmic portion of the chain corresponds to 443–829; it reads LWWCCCRKNP…RISEGSMLGS (387 aa). The Protein kinase domain maps to 484–759; the sequence is KSFKEKLGAG…GKVVQMLEGI (276 aa). ATP-binding positions include 490–498 and K512; that span reads LGAGGFGTV. The residue at position 532 (S532) is a Phosphoserine. The segment at 572–589 is caM-binding; sequence DSAKFLTWEYRFNIALGT. D608 functions as the Proton acceptor in the catalytic mechanism. S625 and S799 each carry phosphoserine.

It belongs to the protein kinase superfamily. Ser/Thr protein kinase family.

The protein localises to the cell membrane. The enzyme catalyses L-seryl-[protein] + ATP = O-phospho-L-seryl-[protein] + ADP + H(+). It carries out the reaction L-threonyl-[protein] + ATP = O-phospho-L-threonyl-[protein] + ADP + H(+). The protein is G-type lectin S-receptor-like serine/threonine-protein kinase At1g34300 of Arabidopsis thaliana (Mouse-ear cress).